The primary structure comprises 296 residues: NAD kinase (296 aa).

Aspartate 72 acts as the Proton acceptor in catalysis. Residues 72-73, 146-147, arginine 157, lysine 174, aspartate 176, 187-192, and glutamine 247 contribute to the NAD(+) site; these read DG, ND, and TAYALS.

This sequence belongs to the NAD kinase family. Requires a divalent metal cation as cofactor.

The protein localises to the cytoplasm. The catalysed reaction is NAD(+) + ATP = ADP + NADP(+) + H(+). Involved in the regulation of the intracellular balance of NAD and NADP, and is a key enzyme in the biosynthesis of NADP. Catalyzes specifically the phosphorylation on 2'-hydroxyl of the adenosine moiety of NAD to yield NADP. The chain is NAD kinase from Pseudomonas fluorescens (strain ATCC BAA-477 / NRRL B-23932 / Pf-5).